The chain runs to 145 residues: ATP synthase epsilon chain (145 aa).

Belongs to the ATPase epsilon chain family. As to quaternary structure, F-type ATPases have 2 components, CF(1) - the catalytic core - and CF(0) - the membrane proton channel. CF(1) has five subunits: alpha(3), beta(3), gamma(1), delta(1), epsilon(1). CF(0) has three main subunits: a, b and c.

The protein resides in the cell inner membrane. Produces ATP from ADP in the presence of a proton gradient across the membrane. This is ATP synthase epsilon chain from Francisella tularensis subsp. holarctica (strain FTNF002-00 / FTA).